The chain runs to 200 residues: Small ribosomal subunit protein eS1 (200 aa).

It belongs to the eukaryotic ribosomal protein eS1 family.

The protein is Small ribosomal subunit protein eS1 of Thermococcus onnurineus (strain NA1).